Consider the following 745-residue polypeptide: Catalase-peroxidase (745 aa).

The tryptophyl-tyrosyl-methioninium (Trp-Tyr) (with M-249) cross-link spans 97–223 (WHSAGTYRTG…LAAVQMGLIY (127 aa)). Residue His-98 is the Proton acceptor of the active site. The segment at residues 223-249 (YVNPEGPDGSPDPWASARDIRMTFARM) is a cross-link (tryptophyl-tyrosyl-methioninium (Tyr-Met) (with W-97)). His-264 serves as a coordination point for heme b. Residues 345-368 (KQWQPVNPKPEDLAPGAHSPDRRV) form a disordered region.

This sequence belongs to the peroxidase family. Peroxidase/catalase subfamily. In terms of assembly, homodimer or homotetramer. Heme b serves as cofactor. Formation of the three residue Trp-Tyr-Met cross-link is important for the catalase, but not the peroxidase activity of the enzyme.

The catalysed reaction is H2O2 + AH2 = A + 2 H2O. It catalyses the reaction 2 H2O2 = O2 + 2 H2O. Its function is as follows. Bifunctional enzyme with both catalase and broad-spectrum peroxidase activity. In Phenylobacterium zucineum (strain HLK1), this protein is Catalase-peroxidase.